A 264-amino-acid chain; its full sequence is Thymidylate synthase (264 aa).

Arginine 21 is a dUMP binding site. Histidine 51 is a (6R)-5,10-methylene-5,6,7,8-tetrahydrofolate binding site. 126 to 127 (RR) contacts dUMP. The active-site Nucleophile is the cysteine 146. DUMP-binding positions include 166 to 169 (RSCD), asparagine 177, and 207 to 209 (HLY). Residue aspartate 169 participates in (6R)-5,10-methylene-5,6,7,8-tetrahydrofolate binding. Residue alanine 263 participates in (6R)-5,10-methylene-5,6,7,8-tetrahydrofolate binding.

The protein belongs to the thymidylate synthase family. Bacterial-type ThyA subfamily. As to quaternary structure, homodimer.

It localises to the cytoplasm. It carries out the reaction dUMP + (6R)-5,10-methylene-5,6,7,8-tetrahydrofolate = 7,8-dihydrofolate + dTMP. It functions in the pathway pyrimidine metabolism; dTTP biosynthesis. Catalyzes the reductive methylation of 2'-deoxyuridine-5'-monophosphate (dUMP) to 2'-deoxythymidine-5'-monophosphate (dTMP) while utilizing 5,10-methylenetetrahydrofolate (mTHF) as the methyl donor and reductant in the reaction, yielding dihydrofolate (DHF) as a by-product. This enzymatic reaction provides an intracellular de novo source of dTMP, an essential precursor for DNA biosynthesis. The protein is Thymidylate synthase of Photorhabdus laumondii subsp. laumondii (strain DSM 15139 / CIP 105565 / TT01) (Photorhabdus luminescens subsp. laumondii).